The chain runs to 362 residues: Chorismate synthase (362 aa).

Arg47 serves as a coordination point for NADP(+). FMN is bound by residues 124 to 126 (RSS), Gly286, 301 to 305 (KPTAT), and Arg327.

This sequence belongs to the chorismate synthase family. Homotetramer. Requires FMNH2 as cofactor.

It catalyses the reaction 5-O-(1-carboxyvinyl)-3-phosphoshikimate = chorismate + phosphate. It functions in the pathway metabolic intermediate biosynthesis; chorismate biosynthesis; chorismate from D-erythrose 4-phosphate and phosphoenolpyruvate: step 7/7. Its function is as follows. Catalyzes the anti-1,4-elimination of the C-3 phosphate and the C-6 proR hydrogen from 5-enolpyruvylshikimate-3-phosphate (EPSP) to yield chorismate, which is the branch point compound that serves as the starting substrate for the three terminal pathways of aromatic amino acid biosynthesis. This reaction introduces a second double bond into the aromatic ring system. This chain is Chorismate synthase, found in Rippkaea orientalis (strain PCC 8801 / RF-1) (Cyanothece sp. (strain PCC 8801)).